The chain runs to 522 residues: MVDDKEKNMKCLTFFLMLPETVKNRSKKSSKKANTSSSSSNSSKLPPVCYEIITLKTKKKKMAADIFPRKKPANSSSTSVQQYHQQNLSNNNLIPAPNWQGLYPTIRERNAMMFNNDLMADVHFVVGPPGGTQRLPGHKYVLAVGSSVFHAMFYGELAEDKDEIRIPDVEPAAFLAMLKYIYCDEIDLAADTVLATLYAAKKYIVPHLARACVNFLETSLSAKNACVLLSQSCLFEEPDLTQRCWEVIDAQAELALKSEGFCDIDFQTLESILRRETLNAKEIVVFEAALNWAEVECQRQDLALSIENKRKVLGKALYLIRIPTMALDDFANGAAQSGVLTLNETNDIFLWYTAAKKPELQFVSKARKGLVPQRCHRFQSCAYRSNQWRYRGRCDSIQFAVDKRVFIAGFGLYGSSCGSAEYSAKIELKRQGVVLGQNLSKYFSDGSSNTFPVWFEYPVQIEPDTFYTASVILDGNELSYFGQEGMTEVQCGKVTVQFQCSSDSTNGTGVQGGQIPELIFYA.

Positions 25–44 (RSKKSSKKANTSSSSSNSSK) are disordered. Residues 32–44 (KANTSSSSSNSSK) show a composition bias toward low complexity. The BTB domain maps to 120-190 (ADVHFVVGPP…IYCDEIDLAA (71 aa)). One can recognise a BACK domain in the interval 235–300 (FEEPDLTQRC…NWAEVECQRQ (66 aa)).

Its subcellular location is the cytoplasm. It is found in the cytosol. It localises to the nucleus. Functionally, acts as a key regulator of dendritic field orientation during development of sensory cortex. Also directs dendrites toward active axon terminals when ectopically expressed. The polypeptide is BTB/POZ domain-containing protein 3 (BTBD3) (Homo sapiens (Human)).